Reading from the N-terminus, the 359-residue chain is UPF0284 protein MTH_1426 (359 aa).

Belongs to the UPF0284 family.

The sequence is that of UPF0284 protein MTH_1426 from Methanothermobacter thermautotrophicus (strain ATCC 29096 / DSM 1053 / JCM 10044 / NBRC 100330 / Delta H) (Methanobacterium thermoautotrophicum).